Reading from the N-terminus, the 898-residue chain is Chaperone protein ClpB 1 (898 aa).

The region spanning 6-148 (PTKFTEQAWD…ELAIKAIRGS (143 aa)) is the Clp R domain. Repeat stretches follow at residues 9–74 (FTEQ…TNRQ) and 85–148 (LGRS…IRGS). The interval 161–344 (EALDKYGRDL…RRFQQVYVKQ (184 aa)) is NBD1. An ATP-binding site is contributed by 208-215 (GEPGVGKT). The interval 345-560 (PSVDDTISIL…IAEIVAGWTG (216 aa)) is linker. Positions 395–536 (IDLVDEAAAR…KESKLLEIQG (142 aa)) form a coiled coil. The NBD2 stretch occupies residues 570–781 (ERQKLLQLEG…RIDDLIIFHT (212 aa)). 620 to 627 (GPTGVGKT) provides a ligand contact to ATP. The interval 782–898 (LKRDELRRIV…TAVEVEVLSS (117 aa)) is C-terminal.

It belongs to the ClpA/ClpB family. Homohexamer. The oligomerization is ATP-dependent.

The protein resides in the cytoplasm. In terms of biological role, part of a stress-induced multi-chaperone system, it is involved in the recovery of the cell from heat-induced damage, in cooperation with DnaK, DnaJ and GrpE. Acts before DnaK, in the processing of protein aggregates. Protein binding stimulates the ATPase activity; ATP hydrolysis unfolds the denatured protein aggregates, which probably helps expose new hydrophobic binding sites on the surface of ClpB-bound aggregates, contributing to the solubilization and refolding of denatured protein aggregates by DnaK. The sequence is that of Chaperone protein ClpB 1 (clpB1) from Synechocystis sp. (strain ATCC 27184 / PCC 6803 / Kazusa).